Consider the following 162-residue polypeptide: Protein A49 (162 aa).

Belongs to the poxviridae A49 protein family.

This is Protein A49 from Homo sapiens (Human).